The chain runs to 660 residues: MTTIIELPEVLANQIAAGEVIERPASVVKELVENAIDAKSSQITVEIEESGLKMMQITDNGEGMSHEDLPLSLRRHATSKIKSQSDLFRIRTLGFRGEALPSVASISKLTIKTATAEAEHGSILVASGGKIEQLEAVSTPVGTKIKVENLFYNTPARLKYMKSLQAELAHVVDVVNRLSLAHPEIAFTLISDGKQLTQTSGTGDLRQALAGIYGLNTAKKMIDISSADLDFEVGGFVSLPELTRANRNYITILINGRYIKNFLLNRAILDGYGSKLMVGRFPIAVIDIQIDPYLADVNVHPTKQEIRISKERELMALISTAISESLREQDLIPDALENLARSSTRSFSKPEQTSLPLQPSQLYYDPQKNDFFTKETVVSEDSPQGFNHEVLIDSDVKQVDNLQVAKTESEAAAPSVKYASRPDPMLSDGEHPGLDVHNKQKLSQMLDRLENEEQSVFPELDYFGQMHGTYLFAQGRDGLFIIDQHAAQERVKYEYYRDKIGEVDNSLQQLLVPYLFEFSGSDFINLQEKMSLLNEVGIYLEPYGNHTFILREHPIWMKEAEIESGVYEMCDMLLLTNEVSIKTYRAELAIMMSCKRSIKANHSLDDYSARQLLLQLAQCKNPYNCPHGRPVLINFSKADMEKMFRRIQENHTSLRELGKY.

The protein belongs to the DNA mismatch repair MutL/HexB family.

This protein is involved in the repair of mismatches in DNA. It is required for dam-dependent methyl-directed DNA mismatch repair. May act as a 'molecular matchmaker', a protein that promotes the formation of a stable complex between two or more DNA-binding proteins in an ATP-dependent manner without itself being part of a final effector complex. This chain is DNA mismatch repair protein MutL, found in Streptococcus equi subsp. zooepidemicus (strain MGCS10565).